The sequence spans 168 residues: CDP-archaeol synthase (168 aa).

The next 5 membrane-spanning stretches (helical) occupy residues 7–27 (PLES…PVLL), 55–75 (GLAT…SATC), 80–100 (YAAG…GAFI), 109–129 (GAPA…LALY), and 130–150 (AAGY…VIAL).

The protein belongs to the CDP-archaeol synthase family. Requires Mg(2+) as cofactor.

It localises to the cell membrane. It carries out the reaction 2,3-bis-O-(geranylgeranyl)-sn-glycerol 1-phosphate + CTP + H(+) = CDP-2,3-bis-O-(geranylgeranyl)-sn-glycerol + diphosphate. The protein operates within membrane lipid metabolism; glycerophospholipid metabolism. Functionally, catalyzes the formation of CDP-2,3-bis-(O-geranylgeranyl)-sn-glycerol (CDP-archaeol) from 2,3-bis-(O-geranylgeranyl)-sn-glycerol 1-phosphate (DGGGP) and CTP. This reaction is the third ether-bond-formation step in the biosynthesis of archaeal membrane lipids. This chain is CDP-archaeol synthase, found in Hyperthermus butylicus (strain DSM 5456 / JCM 9403 / PLM1-5).